The chain runs to 1304 residues: Angiotensin-converting enzyme (1304 aa).

The N-terminal stretch at 1 to 27 (MGAASGRRGPGLLLPLLLLLPPQPALA) is a signal peptide. The Extracellular portion of the chain corresponds to 28–1257 (LDPGLQPGNF…LDAQQARVGQ (1230 aa)). Asparagine 36, asparagine 52, asparagine 72, asparagine 109, asparagine 144, and asparagine 158 each carry an N-linked (GlcNAc...) asparagine glycan. Peptidase M2 domains are found at residues 38–622 (SADE…LGWP) and 641–1220 (VTDE…LGWP). Cysteine 155 and cysteine 163 are joined by a disulfide. Tyrosine 229 contributes to the chloride binding site. The N-linked (GlcNAc...) asparagine glycan is linked to asparagine 316. Cysteines 357 and 375 form a disulfide. Histidine 388 lines the Zn(2+) pocket. Residue glutamate 389 is the Proton acceptor 1 of the active site. Histidine 392 and glutamate 416 together coordinate Zn(2+). 3 N-linked (GlcNAc...) asparagine glycosylation sites follow: asparagine 440, asparagine 443, and asparagine 507. Residue histidine 518 is the Proton donor 1 of the active site. Arginine 527 contacts chloride. A disulfide bridge links cysteine 543 with cysteine 555. An N-linked (GlcNAc...) asparagine glycan is attached at asparagine 675. 2 N-linked (GlcNAc...) (complex) asparagine glycosylation sites follow: asparagine 693 and asparagine 712. Cysteines 755 and 761 form a disulfide. N-linked (GlcNAc...) asparagine glycosylation occurs at asparagine 758. Residues arginine 789 and tyrosine 827 each contribute to the chloride site. The N-linked (GlcNAc...) asparagine glycan is linked to asparagine 940. A disulfide bond links cysteine 955 and cysteine 973. Histidine 986 contributes to the Zn(2+) binding site. Glutamate 987 functions as the Proton acceptor 2 in the catalytic mechanism. Zn(2+)-binding residues include histidine 990 and glutamate 1014. 2 residues coordinate chloride: tryptophan 1088 and arginine 1092. Histidine 1116 acts as the Proton donor 2 in catalysis. Arginine 1125 lines the chloride pocket. Cysteines 1141 and 1153 form a disulfide. N-linked (GlcNAc...) asparagine glycosylation is present at asparagine 1189. Positions 1213-1254 (HGEKLGWPQYNWTPNSARSEGPLPDSGRVSFLGLDLDAQQAR) are juxtamembrane stalk. The chain crosses the membrane as a helical span at residues 1258–1274 (WLLLFLGIALLVATLGL). The Cytoplasmic segment spans residues 1275–1304 (SQRLFSIRHRSLHRHSHGPQFDSEVELRHS). Position 1297 is a phosphoserine (serine 1297).

The protein belongs to the peptidase M2 family. As to quaternary structure, monomer and homodimer; homodimerizes following binding to an inhibitor. Interacts with calmodulin (CALM1, CALM2 or CALM3); interaction takes place in the cytoplasmic region and regulates phosphorylation and proteolytic cleavage. Zn(2+) is required as a cofactor. It depends on chloride as a cofactor. Post-translationally, produced following proteolytic cleavage by secretase enzymes that cleave the transmembrane form in the juxtamembrane stalk region upstream of the transmembrane region. Cleavage can take place at different sites of the juxtamembrane stalk region. Phosphorylated by CK2 on Ser-1297; which allows membrane retention. Phosphorylated on tyrosine residues on its extracellular part, promoting cleavage by secretase enzymes and formation of the soluble form (Angiotensin-converting enzyme, soluble form).

The protein resides in the cell membrane. Its subcellular location is the cytoplasm. It is found in the secreted. It carries out the reaction Release of a C-terminal dipeptide, oligopeptide-|-Xaa-Yaa, when Xaa is not Pro, and Yaa is neither Asp nor Glu. Thus, conversion of angiotensin I to angiotensin II, with increase in vasoconstrictor activity, but no action on angiotensin II.. The enzyme catalyses angiotensin I + H2O = L-histidyl-L-leucine + angiotensin II. It catalyses the reaction bradykinin + H2O = L-Phe-L-Arg + bradykinin(1-7). The catalysed reaction is substance P + H2O = substance P(1-9) + L-Leu-L-Met-NH2. It carries out the reaction substance P + H2O = substance P(1-8) + Gly-L-Leu-L-Met-NH2. The enzyme catalyses substance P + H2O = L-Phe-L-Phe-Gly-L-Leu-L-Met-NH2 + substance P(1-6). It catalyses the reaction neurotensin + H2O = neurotensin(1-11) + L-isoleucyl-L-leucine. The catalysed reaction is goralatide + H2O = N-acetyl-L-seryl-L-aspartate + L-lysyl-L-proline. It carries out the reaction Met-enkephalin + H2O = L-phenylalanyl-L-methionine + L-tyrosylglycylglycine. The enzyme catalyses Leu-enkephalin + H2O = L-tyrosylglycylglycine + L-phenylalanyl-L-leucine. It catalyses the reaction Met-enkephalin-Arg-Phe + H2O = L-arginyl-L-phenylalanine + Met-enkephalin. The dipeptidyl carboxypeptidase activity is strongly activated by chloride. The dipeptidyl carboxypeptidase activity is specifically inhibited by lisinopril, captopril and enalaprilat. Its activity is regulated as follows. Strongly inhibited by lisinopril and captopril. In terms of biological role, dipeptidyl carboxypeptidase that removes dipeptides from the C-terminus of a variety of circulating hormones, such as angiotensin I, bradykinin or enkephalins, thereby playing a key role in the regulation of blood pressure, electrolyte homeostasis or synaptic plasticity. Composed of two similar catalytic domains, each possessing a functional active site, with different selectivity for substrates. Plays a major role in the angiotensin-renin system that regulates blood pressure and sodium retention by the kidney by converting angiotensin I to angiotensin II, resulting in an increase of the vasoconstrictor activity of angiotensin. Also able to inactivate bradykinin, a potent vasodilator, and therefore enhance the blood pressure response. Acts as a regulator of synaptic transmission by mediating cleavage of neuropeptide hormones, such as substance P, neurotensin or enkephalins. Catalyzes degradation of different enkephalin neuropeptides (Met-enkephalin, Leu-enkephalin, Met-enkephalin-Arg-Phe and possibly Met-enkephalin-Arg-Gly-Leu). Acts as a regulator of synaptic plasticity in the nucleus accumbens of the brain by mediating cleavage of Met-enkephalin-Arg-Phe, a strong ligand of Mu-type opioid receptor OPRM1, into Met-enkephalin. Met-enkephalin-Arg-Phe cleavage by ACE decreases activation of OPRM1, leading to long-term synaptic potentiation of glutamate release. Also acts as a regulator of hematopoietic stem cell differentiation by mediating degradation of hemoregulatory peptide N-acetyl-SDKP (AcSDKP). Acts as a regulator of cannabinoid signaling pathway by mediating degradation of hemopressin, an antagonist peptide of the cannabinoid receptor CNR1. Involved in amyloid-beta metabolism by catalyzing degradation of Amyloid-beta protein 40 and Amyloid-beta protein 42 peptides, thereby preventing plaque formation. Catalyzes cleavage of cholecystokinin (maturation of Cholecystokinin-8 and Cholecystokinin-5) and Gonadoliberin-1 (both maturation and degradation) hormones. Degradation of hemoregulatory peptide N-acetyl-SDKP (AcSDKP) and amyloid-beta proteins is mediated by the N-terminal catalytic domain, while angiotensin I and cholecystokinin cleavage is mediated by the C-terminal catalytic region. Its function is as follows. Soluble form that is released in blood plasma and other body fluids following proteolytic cleavage in the juxtamembrane stalk region. Isoform produced by alternative promoter usage that is specifically expressed in spermatocytes and adult testis, and which is required for male fertility. In contrast to somatic isoforms, only contains one catalytic domain. Acts as a dipeptidyl carboxypeptidase that removes dipeptides from the C-terminus of substrates. The identity of substrates that are needed for male fertility is unknown. May also have a glycosidase activity which releases GPI-anchored proteins from the membrane by cleaving the mannose linkage in the GPI moiety. The GPIase activity was reported to be essential for the egg-binding ability of the sperm. This activity is however unclear and has been challenged by other groups, suggesting that it may be indirect. This is Angiotensin-converting enzyme from Pan troglodytes (Chimpanzee).